Reading from the N-terminus, the 302-residue chain is MYSCLSGGLGNQMFQYAAAYILQRKLKQRSLVLDDSYFLDCSNRDTRRRFELNQFNICYDRLTTSKEKKEISIIRHVNRYRLPLFVTNSIFGVLLKKNYLPEAKFYEFLNNCKLQVKNGYCLFSYFQDATLIDSHRDMILPLFQINEDLLNLCNDLHIYKKVICENANTTSLHIRRGDYITNPHASKFHGVLPMDYYEKAIRYIEDVQGEQVIIVFSDDVKWAENTFANQPNYYVVNNSECEYSAIDMFLMSKCKNNIIANSTYSWWGAWLNTFEDKIVVSPRKWFAGNNKSKLTMDSWINL.

This sequence belongs to the glycosyltransferase 11 family.

It carries out the reaction beta-D-Gal-(1-&gt;3)-alpha-D-GalNAc-(1-&gt;3)-alpha-D-GalNAc-di-trans,octa-cis-undecaprenyl diphosphate + GDP-beta-L-fucose = alpha-L-Fuc-(1-&gt;2)-beta-D-Gal-(1-&gt;3)-alpha-D-GalNAc-(1-&gt;3)-alpha-D-GalNAc-di-trans,octa-cis-undecaprenyl diphosphate + GDP + H(+). The protein operates within bacterial outer membrane biogenesis; LPS O-antigen biosynthesis. Involved in the assembly of the O-repeating unit during O-antigen biosynthesis. The polypeptide is O-antigen biosynthesis glycosyltransferase WbnK (Escherichia coli).